The primary structure comprises 265 residues: UDP-N-acetylenolpyruvoylglucosamine reductase (265 aa).

Residues Gly15–Arg169 enclose the FAD-binding PCMH-type domain. Arg149 is a catalytic residue. A disordered region spans residues Asp182–Gly203. Cys196 (proton donor) is an active-site residue.

Belongs to the MurB family. Requires FAD as cofactor.

The protein localises to the cytoplasm. The enzyme catalyses UDP-N-acetyl-alpha-D-muramate + NADP(+) = UDP-N-acetyl-3-O-(1-carboxyvinyl)-alpha-D-glucosamine + NADPH + H(+). It functions in the pathway cell wall biogenesis; peptidoglycan biosynthesis. Cell wall formation. In Thermus thermophilus (strain ATCC 27634 / DSM 579 / HB8), this protein is UDP-N-acetylenolpyruvoylglucosamine reductase.